Consider the following 143-residue polypeptide: MQFNIQEIIKMIPHSYPFLLIDRVTACTPNESVTAIKNVTFNEPFFIGHFPGNPIMPGVLIVEAMAQACIICTMSSMQNYSVYLMSIELAKFRKPVIPGDTLILTVNVVHKRKNTCKFECHAHVEGTLVAEAQILAMTKQNEA.

The active site involves His49.

The protein belongs to the thioester dehydratase family. FabZ subfamily.

It localises to the cytoplasm. It carries out the reaction a (3R)-hydroxyacyl-[ACP] = a (2E)-enoyl-[ACP] + H2O. In terms of biological role, involved in unsaturated fatty acids biosynthesis. Catalyzes the dehydration of short chain beta-hydroxyacyl-ACPs and long chain saturated and unsaturated beta-hydroxyacyl-ACPs. The sequence is that of 3-hydroxyacyl-[acyl-carrier-protein] dehydratase FabZ from Ehrlichia chaffeensis (strain ATCC CRL-10679 / Arkansas).